A 270-amino-acid polypeptide reads, in one-letter code: Probable feruloyl esterase C (270 aa).

Residues 1-21 (MIKSIILQAIMVLSTLTSVHG) form the signal peptide. Residue asparagine 23 is glycosylated (N-linked (GlcNAc...) asparagine).

This sequence belongs to the faeC family.

The protein resides in the secreted. The catalysed reaction is feruloyl-polysaccharide + H2O = ferulate + polysaccharide.. Functionally, involved in degradation of plant cell walls. Hydrolyzes the feruloyl-arabinose ester bond in arabinoxylans, and the feruloyl-galactose ester bond in pectin. Active against paranitrophenyl-acetate, methyl ferulate and wheat arabinoxylan. This is Probable feruloyl esterase C (faeC) from Aspergillus oryzae (strain ATCC 42149 / RIB 40) (Yellow koji mold).